Consider the following 134-residue polypeptide: D-ribose pyranase (134 aa).

His-20 serves as the catalytic Proton donor. Residues Asp-28, His-101, and 123–125 (YCN) contribute to the substrate site.

This sequence belongs to the RbsD / FucU family. RbsD subfamily. As to quaternary structure, homodecamer.

The protein resides in the cytoplasm. The catalysed reaction is beta-D-ribopyranose = beta-D-ribofuranose. The protein operates within carbohydrate metabolism; D-ribose degradation; D-ribose 5-phosphate from beta-D-ribopyranose: step 1/2. Its function is as follows. Catalyzes the interconversion of beta-pyran and beta-furan forms of D-ribose. This is D-ribose pyranase from Pseudomonas fluorescens (strain ATCC BAA-477 / NRRL B-23932 / Pf-5).